A 258-amino-acid polypeptide reads, in one-letter code: Type III pantothenate kinase (258 aa).

Residue 12 to 19 (DIGNTSIA) coordinates ATP. Substrate contacts are provided by residues tyrosine 94 and 109–112 (GSDV). The active-site Proton acceptor is the aspartate 111. Aspartate 132 is a K(+) binding site. Threonine 135 is an ATP binding site. Threonine 187 is a binding site for substrate.

This sequence belongs to the type III pantothenate kinase family. In terms of assembly, homodimer. The cofactor is NH4(+). It depends on K(+) as a cofactor.

It is found in the cytoplasm. It carries out the reaction (R)-pantothenate + ATP = (R)-4'-phosphopantothenate + ADP + H(+). It participates in cofactor biosynthesis; coenzyme A biosynthesis; CoA from (R)-pantothenate: step 1/5. Catalyzes the phosphorylation of pantothenate (Pan), the first step in CoA biosynthesis. The sequence is that of Type III pantothenate kinase from Borreliella afzelii (strain PKo) (Borrelia afzelii).